The following is a 191-amino-acid chain: MAEPLLVVGLGNPGDNYARTRHNVGFMVADLLAARMGSKFKAHKRSGAEIVSGRLAGRSVVVAKPRCYMNESGRQVGPLAKFYSVPPGDIIVIHDDLDLDFGRIRLKIGGGEGGHNGLRSVSNALGSKDFQRVRIGIGRPPGRKDPAAFVLENFTSTERADVPTICEQAADATELLIELGLEPAQNRVHAW.

Tyr17 serves as a coordination point for tRNA. Residue His22 is the Proton acceptor of the active site. Residues Tyr68, Asn70, and Asn116 each contribute to the tRNA site.

The protein belongs to the PTH family. In terms of assembly, monomer.

It localises to the cytoplasm. The enzyme catalyses an N-acyl-L-alpha-aminoacyl-tRNA + H2O = an N-acyl-L-amino acid + a tRNA + H(+). In terms of biological role, hydrolyzes ribosome-free peptidyl-tRNAs (with 1 or more amino acids incorporated), which drop off the ribosome during protein synthesis, or as a result of ribosome stalling. Catalyzes the release of premature peptidyl moieties from peptidyl-tRNA molecules trapped in stalled 50S ribosomal subunits, and thus maintains levels of free tRNAs and 50S ribosomes. The polypeptide is Peptidyl-tRNA hydrolase (Mycobacterium avium (strain 104)).